A 650-amino-acid chain; its full sequence is Histone-lysine N-methyltransferase family member SUVH9 (650 aa).

Disordered stretches follow at residues 1–24 (MGSS…KLEP) and 95–129 (PVEE…RSSE). The segment covering 7–20 (PLDPSLNPSPSLIP) has biased composition (low complexity). Over residues 107–118 (YSTSDSSPSVAT) the composition is skewed to polar residues. Residues 205-352 (GSIPGVQVGD…FGVFKYRLER (148 aa)) form the YDG domain. In terms of domain architecture, Pre-SET spans 432–490 (SGCDCVNGCGSGCLCEAKNSGEIAYDYNGTLIRQKPLIHECGSACQCPPSCRNRVTQKG). Zn(2+) contacts are provided by cysteine 434, cysteine 436, cysteine 440, cysteine 444, cysteine 446, cysteine 472, cysteine 476, cysteine 478, and cysteine 482. The 145-residue stretch at 493–637 (NRLEVFRSLE…PMTELSLDYG (145 aa)) folds into the SET domain.

This sequence belongs to the class V-like SAM-binding methyltransferase superfamily. Histone-lysine methyltransferase family. Suvar3-9 subfamily. In terms of assembly, component of an RNA-directed DNA methylation (RdDM) complex that contains at least MORC6, MORC1/CRT1, MORC2, SWI3D and SUVH9. Interacts directly with MORC6, MORC2 and MORC1/CRT1. Interacts with SWI3B, SWI3C and SWI3D.

It is found in the nucleus. Its subcellular location is the chromosome. The protein localises to the centromere. Its function is as follows. Histone methyltransferase family member that plays a role in gene silencing. Together with MORC6 and SUVH2, regulates the silencing of some transposable elements (TEs). According to PubMed:19043555, the protein does not bind S-adenosyl-L-methionine and lacks methyltransferase activity. Instead, it may function downstream of DRM2 in RNA-directed DNA methylation, binding to methylated DNA and recruiting DNA-directed RNA polymerase V to chromatin. This is Histone-lysine N-methyltransferase family member SUVH9 (SUVH9) from Arabidopsis thaliana (Mouse-ear cress).